A 478-amino-acid chain; its full sequence is Islet cell autoantigen 1 (478 aa).

The region spanning 50–253 is the AH domain; that stretch reads ASDADLDAKL…TSHTMAAIHE (204 aa). The span at 306-317 shows a compositional bias: basic and acidic residues; that stretch reads EHKDSSAYKTEE. Disordered stretches follow at residues 306-365 and 398-422; these read EHKD…SGDK and LKEP…GFLP.

As to expression, predominantly expressed in brain, pancreas and stomach mucosa. High expression also found in stomach muscle and testis.

The protein resides in the cytoplasm. Its subcellular location is the cytosol. It localises to the golgi apparatus membrane. It is found in the cytoplasmic vesicle. The protein localises to the secretory vesicle membrane. The protein resides in the secretory vesicle. Its subcellular location is the synaptic vesicle membrane. Its function is as follows. May play a role in neurotransmitter secretion. The sequence is that of Islet cell autoantigen 1 from Mus musculus (Mouse).